We begin with the raw amino-acid sequence, 28 residues long: Kalata-B12 (28 aa).

A cross-link (cyclopeptide (Gly-Asp)) is located at residues 1–28 (GSLCGDTCFVLGCNDSSCSCNYPICVKD). 3 disulfide bridges follow: Cys4–Cys18, Cys8–Cys20, and Cys13–Cys25.

In terms of processing, this is a cyclic peptide.

Probably participates in a plant defense mechanism. This is Kalata-B12 from Oldenlandia affinis.